We begin with the raw amino-acid sequence, 367 residues long: DNA replication and repair protein RecF (367 aa).

Residue 30 to 37 (GANGSGKT) coordinates ATP.

The protein belongs to the RecF family.

The protein resides in the cytoplasm. Its function is as follows. The RecF protein is involved in DNA metabolism; it is required for DNA replication and normal SOS inducibility. RecF binds preferentially to single-stranded, linear DNA. It also seems to bind ATP. This chain is DNA replication and repair protein RecF, found in Pseudomonas syringae pv. syringae (strain B728a).